The primary structure comprises 315 residues: Cyclin-dependent kinase B2-2 (315 aa).

In terms of domain architecture, Protein kinase spans 16 to 306 (FEKLEKVGEG…AKKAMEHPYF (291 aa)). Residues 22 to 30 (VGEGTYGKV) and lysine 45 contribute to the ATP site. Tyrosine 27 is modified (phosphotyrosine). Aspartate 147 functions as the Proton acceptor in the catalytic mechanism. Threonine 181 is modified (phosphothreonine).

Belongs to the protein kinase superfamily. CMGC Ser/Thr protein kinase family. CDC2/CDKX subfamily. Expressed in flowers.

The enzyme catalyses L-seryl-[protein] + ATP = O-phospho-L-seryl-[protein] + ADP + H(+). The catalysed reaction is L-threonyl-[protein] + ATP = O-phospho-L-threonyl-[protein] + ADP + H(+). It catalyses the reaction [DNA-directed RNA polymerase] + ATP = phospho-[DNA-directed RNA polymerase] + ADP + H(+). This Arabidopsis thaliana (Mouse-ear cress) protein is Cyclin-dependent kinase B2-2 (CDKB2-2).